A 185-amino-acid chain; its full sequence is ATP synthase subunit b (185 aa).

A helical transmembrane segment spans residues 26–46 (LVLIGFAILLFIVIKFVVPMF).

Belongs to the ATPase B chain family. In terms of assembly, F-type ATPases have 2 components, F(1) - the catalytic core - and F(0) - the membrane proton channel. F(1) has five subunits: alpha(3), beta(3), gamma(1), delta(1), epsilon(1). F(0) has three main subunits: a(1), b(2) and c(10-14). The alpha and beta chains form an alternating ring which encloses part of the gamma chain. F(1) is attached to F(0) by a central stalk formed by the gamma and epsilon chains, while a peripheral stalk is formed by the delta and b chains.

Its subcellular location is the cell membrane. Its function is as follows. F(1)F(0) ATP synthase produces ATP from ADP in the presence of a proton or sodium gradient. F-type ATPases consist of two structural domains, F(1) containing the extramembraneous catalytic core and F(0) containing the membrane proton channel, linked together by a central stalk and a peripheral stalk. During catalysis, ATP synthesis in the catalytic domain of F(1) is coupled via a rotary mechanism of the central stalk subunits to proton translocation. Functionally, component of the F(0) channel, it forms part of the peripheral stalk, linking F(1) to F(0). This Renibacterium salmoninarum (strain ATCC 33209 / DSM 20767 / JCM 11484 / NBRC 15589 / NCIMB 2235) protein is ATP synthase subunit b.